The sequence spans 232 residues: 2,3-bisphosphoglycerate-dependent phosphoglycerate mutase (232 aa).

Substrate is bound by residues 10 to 17, 23 to 24, Arg62, 89 to 92, Lys100, 116 to 117, and 185 to 186; these read RHGESQWN, TG, ERHY, RR, and GN. The active-site Tele-phosphohistidine intermediate is the His11. The Proton donor/acceptor role is filled by Glu89.

The protein belongs to the phosphoglycerate mutase family. BPG-dependent PGAM subfamily. Homodimer.

The catalysed reaction is (2R)-2-phosphoglycerate = (2R)-3-phosphoglycerate. The protein operates within carbohydrate degradation; glycolysis; pyruvate from D-glyceraldehyde 3-phosphate: step 3/5. In terms of biological role, catalyzes the interconversion of 2-phosphoglycerate and 3-phosphoglycerate. The polypeptide is 2,3-bisphosphoglycerate-dependent phosphoglycerate mutase (Blochmanniella floridana).